The following is a 138-amino-acid chain: Acidic phospholipase A2 ammodytin I1 (138 aa).

The signal sequence occupies residues 1–16 (MRILWIVAVCLIGAEG). Disulfide bonds link C42-C131, C44-C60, C59-C111, C65-C138, C66-C104, C73-C97, and C91-C102. 3 residues coordinate Ca(2+): Y43, G45, and G47. H63 is a catalytic residue. Residue D64 participates in Ca(2+) binding. Residue D105 is part of the active site.

This sequence belongs to the phospholipase A2 family. Group II subfamily. D49 sub-subfamily. It depends on Ca(2+) as a cofactor. Expressed by the venom gland.

The protein localises to the secreted. It carries out the reaction a 1,2-diacyl-sn-glycero-3-phosphocholine + H2O = a 1-acyl-sn-glycero-3-phosphocholine + a fatty acid + H(+). Snake venom phospholipase A2 (PLA2) that has enzymatic activity but is non-toxic. PLA2 catalyzes the calcium-dependent hydrolysis of the 2-acyl groups in 3-sn-phosphoglycerides. This Vipera ammodytes ammodytes (Western sand viper) protein is Acidic phospholipase A2 ammodytin I1.